The chain runs to 384 residues: Heparin lyase I (384 aa).

The signal sequence occupies residues Met-1–Ala-21. Gln-22 is subject to Blocked amino end (Gln). Ser-39 carries an O-linked (Man...) serine glycan.

Monomer. The N-terminus is blocked.

The protein localises to the periplasm. It carries out the reaction Eliminative cleavage of polysaccharides containing (1-&gt;4)-linked D-glucuronate or L-iduronate residues and (1-&gt;4)-alpha-linked 2-sulfoamino-2-deoxy-6-sulfo-D-glucose residues to give oligosaccharides with terminal 4-deoxy-alpha-D-gluc-4-enuronosyl groups at their non-reducing ends.. Degrades heparin and heparan sulfate. Also implicated in the release of heparin-bound growth factors from the extracellular matrix. This chain is Heparin lyase I, found in Pedobacter heparinus (Flavobacterium heparinum).